Consider the following 496-residue polypeptide: Lysine--tRNA ligase (496 aa).

Mg(2+) contacts are provided by Glu409 and Glu416.

Belongs to the class-II aminoacyl-tRNA synthetase family. As to quaternary structure, homodimer. Mg(2+) serves as cofactor.

Its subcellular location is the cytoplasm. The catalysed reaction is tRNA(Lys) + L-lysine + ATP = L-lysyl-tRNA(Lys) + AMP + diphosphate. The chain is Lysine--tRNA ligase from Streptococcus pneumoniae serotype 19F (strain G54).